The sequence spans 130 residues: Small ribosomal subunit protein uS9 (130 aa).

The protein belongs to the universal ribosomal protein uS9 family.

This chain is Small ribosomal subunit protein uS9, found in Halalkalibacterium halodurans (strain ATCC BAA-125 / DSM 18197 / FERM 7344 / JCM 9153 / C-125) (Bacillus halodurans).